We begin with the raw amino-acid sequence, 497 residues long: Aldehyde dehydrogenase (497 aa).

242-247 (GSTLVG) contacts NAD(+). Glutamate 265 acts as the Proton acceptor in catalysis. Cysteine 299 functions as the Nucleophile in the catalytic mechanism.

The protein belongs to the aldehyde dehydrogenase family.

It catalyses the reaction an aldehyde + NAD(+) + H2O = a carboxylate + NADH + 2 H(+). It participates in alcohol metabolism; ethanol degradation; acetate from ethanol: step 2/2. The protein is Aldehyde dehydrogenase (aldA) of Aspergillus niger.